The primary structure comprises 356 residues: Glutamine synthetase cytosolic isozyme (356 aa).

The region spanning 19–99 (IIAEYIWIGG…VMCDAYTPAG (81 aa)) is the GS beta-grasp domain. Residues 38 to 66 (RTLPGPVTDPSQLPKWNYDGSSTGQAPGE) form a disordered region. The GS catalytic domain maps to 106–356 (KRHAAAKIFS…IADTTILWKP (251 aa)).

This sequence belongs to the glutamine synthetase family. As to quaternary structure, homooctamer.

Its subcellular location is the cytoplasm. It catalyses the reaction L-glutamate + NH4(+) + ATP = L-glutamine + ADP + phosphate + H(+). This is Glutamine synthetase cytosolic isozyme from Medicago sativa (Alfalfa).